Reading from the N-terminus, the 640-residue chain is Phosphomethylpyrimidine synthase (640 aa).

Substrate-binding positions include Asn-235, Met-264, Tyr-293, His-329, 349 to 351 (SRG), 390 to 393 (DGLR), and Glu-429. His-433 lines the Zn(2+) pocket. Residue Tyr-456 participates in substrate binding. His-497 lines the Zn(2+) pocket. [4Fe-4S] cluster contacts are provided by Cys-577, Cys-580, and Cys-585.

This sequence belongs to the ThiC family. In terms of assembly, homodimer. The cofactor is [4Fe-4S] cluster.

It catalyses the reaction 5-amino-1-(5-phospho-beta-D-ribosyl)imidazole + S-adenosyl-L-methionine = 4-amino-2-methyl-5-(phosphooxymethyl)pyrimidine + CO + 5'-deoxyadenosine + formate + L-methionine + 3 H(+). It functions in the pathway cofactor biosynthesis; thiamine diphosphate biosynthesis. Its function is as follows. Catalyzes the synthesis of the hydroxymethylpyrimidine phosphate (HMP-P) moiety of thiamine from aminoimidazole ribotide (AIR) in a radical S-adenosyl-L-methionine (SAM)-dependent reaction. This Photobacterium profundum (strain SS9) protein is Phosphomethylpyrimidine synthase.